A 974-amino-acid polypeptide reads, in one-letter code: MKNITCYLLLLCMLFTTCYSLNNDLDALLKLKKSMKGEKAKDDALKDWKFSTSASAHCSFSGVKCDEDQRVIALNVTQVPLFGHLSKEIGELNMLESLTITMDNLTGELPTELSKLTSLRILNISHNLFSGNFPGNITFGMKKLEALDAYDNNFEGPLPEEIVSLMKLKYLSFAGNFFSGTIPESYSEFQKLEILRLNYNSLTGKIPKSLSKLKMLKELQLGYENAYSGGIPPELGSIKSLRYLEISNANLTGEIPPSLGNLENLDSLFLQMNNLTGTIPPELSSMRSLMSLDLSINGLSGEIPETFSKLKNLTLINFFQNKLRGSIPAFIGDLPNLETLQVWENNFSFVLPQNLGSNGKFIYFDVTKNHLTGLIPPELCKSKKLKTFIVTDNFFRGPIPNGIGPCKSLEKIRVANNYLDGPVPPGIFQLPSVQIIELGNNRFNGQLPTEISGNSLGNLALSNNLFTGRIPASMKNLRSLQTLLLDANQFLGEIPAEVFALPVLTRINISGNNLTGGIPKTVTQCSSLTAVDFSRNMLTGEVPKGMKNLKVLSIFNVSHNSISGKIPDEIRFMTSLTTLDLSYNNFTGIVPTGGQFLVFNDRSFAGNPSLCFPHQTTCSSLLYRSRKSHAKEKAVVIAIVFATAVLMVIVTLHMMRKRKRHMAKAWKLTAFQKLEFRAEEVVECLKEENIIGKGGAGIVYRGSMANGTDVAIKRLVGQGSGRNDYGFKAEIETLGRIRHRNIMRLLGYVSNKDTNLLLYEYMPNGSLGEWLHGAKGCHLSWEMRYKIAVEAAKGLCYLHHDCSPLIIHRDVKSNNILLDADFEAHVADFGLAKFLYDPGASQSMSSIAGSYGYIAPEYAYTLKVDEKSDVYSFGVVLLELIIGRKPVGEFGDGVDIVGWINKTELELYQPSDKALVSAVVDPRLNGYPLTSVIYMFNIAMMCVKEMGPARPTMREVVHMLTNPPHSTSHNLINL.

Residues 1 to 20 (MKNITCYLLLLCMLFTTCYS) form the signal peptide. Asn-75, Asn-104, Asn-123, and Asn-136 each carry an N-linked (GlcNAc...) asparagine glycan. 20 LRR repeats span residues 92 to 116 (LNML…LSKL), 117 to 141 (TSLR…TFGM), 143 to 165 (KLEA…IVSL), 166 to 188 (MKLK…SYSE), 189 to 213 (FQKL…LSKL), 238 to 262 (IKSL…LGNL), 263 to 286 (ENLD…LSSM), 288 to 309 (SLMS…TFSK), 310 to 334 (LKNL…IGDL), 335 to 358 (PNLE…LGSN), 360 to 382 (KFIY…LCKS), 383 to 406 (KKLK…IGPC), 407 to 430 (KSLE…IFQL), 431 to 454 (PSVQ…ISGN), 456 to 477 (LGNL…MKNL), 478 to 501 (RSLQ…VFAL), 503 to 525 (VLTR…VTQC), 527 to 549 (SLTA…MKNL), 550 to 573 (KVLS…IRFM), and 574 to 598 (TSLT…QFLV). N-linked (GlcNAc...) asparagine glycans are attached at residues Asn-250 and Asn-274. 2 N-linked (GlcNAc...) asparagine glycosylation sites follow: Asn-312 and Asn-346. N-linked (GlcNAc...) asparagine glycans are attached at residues Asn-508 and Asn-513. N-linked (GlcNAc...) asparagine glycosylation is found at Asn-556 and Asn-585. A helical transmembrane segment spans residues 635–655 (VVIAIVFATAVLMVIVTLHMM). A Protein kinase domain is found at 685–972 (LKEENIIGKG…PPHSTSHNLI (288 aa)). ATP contacts are provided by residues 691 to 699 (IGKGGAGIV) and Lys-713. Asp-810 acts as the Proton acceptor in catalysis.

The protein belongs to the protein kinase superfamily. Ser/Thr protein kinase family. Expressed in roots and shoots. Expressed in the vasculature of leaves, petioles, stems and roots.

It localises to the cell membrane. The enzyme catalyses L-seryl-[protein] + ATP = O-phospho-L-seryl-[protein] + ADP + H(+). The catalysed reaction is L-threonyl-[protein] + ATP = O-phospho-L-threonyl-[protein] + ADP + H(+). Functionally, LRR receptor kinase involved in the regulation of root growth and root nodule organogenesis. Involved in long distance nodulation signaling events. Involved in the autoregulation of nodulation (AON), a long distance systemic signaling from root to shoot and back again, which allows legumes to limit the number of root nodules formed based on available nitrogen and previous rhizobial colonization. Acts from shoot to root to control AON. Interacts with CLE12 and CLE13 signaling to control nodule numbers. Required for the modulation of shoot-to-root auxin transport in response to altered nitrogen tissue concentrations and in the absence of rhizobia. Shoot-to-root auxin transport influences lateral root density and length. Involved in the regulation of root colonization by arbuscular mycorrhizal (AM) fungi. Interacts with CLE33 and CL53 signaling to repress strigolactone biosynthetic genes and strigolactone content in the roots, and consequently reduces the promotion of further colonization by AM fungi. The polypeptide is Leucine-rich repeat receptor-like kinase protein SUNN (Medicago truncatula (Barrel medic)).